Consider the following 221-residue polypeptide: Pleckstrin homology domain-containing family B member 2 (221 aa).

Residues 2 to 109 (AFVKSGWLLR…WKFTLQDSRT (108 aa)) form the PH domain. K20 serves as a coordination point for a 1,2-diacyl-sn-glycero-3-phospho-L-serine.

Highly expressed in brain, retina, heart and kidney. Detected at lower levels in lung, muscle and nerve.

Its subcellular location is the recycling endosome membrane. Functionally, involved in retrograde transport of recycling endosomes. The sequence is that of Pleckstrin homology domain-containing family B member 2 (Plekhb2) from Mus musculus (Mouse).